Here is a 452-residue protein sequence, read N- to C-terminus: Lipase member H (452 aa).

An N-terminal signal peptide occupies residues methionine 1–serine 16. N-linked (GlcNAc...) asparagine glycosylation is found at asparagine 50, asparagine 66, and asparagine 122. Residue serine 154 is the Nucleophile of the active site. Aspartate 178 functions as the Charge relay system in the catalytic mechanism. The cysteines at positions 233 and 247 are disulfide-linked. Histidine 249 (charge relay system) is an active-site residue. Asparagine 263 carries an N-linked (GlcNAc...) asparagine glycan. Cystine bridges form between cysteine 271–cysteine 282, cysteine 285–cysteine 293, and cysteine 428–cysteine 447.

The protein belongs to the AB hydrolase superfamily. Lipase family. Interacts with TTMP/C3orf52. As to expression, expressed in liver and lacrimal gland.

The protein localises to the secreted. The protein resides in the cell membrane. The enzyme catalyses 1-hexadecanoyl-2-(9Z-octadecenoyl)-sn-glycero-3-phosphate + H2O = 2-(9Z-octadecenoyl)-sn-glycero-3-phosphate + hexadecanoate + H(+). Its function is as follows. Hydrolyzes specifically phosphatidic acid (PA) to produce 2-acyl lysophosphatidic acid (LPA; a potent bioactive lipid mediator) and fatty acid. Does not hydrolyze other phospholipids, like phosphatidylserine (PS), phosphatidylcholine (PC) and phosphatidylethanolamine (PE) or triacylglycerol (TG). This Oryctolagus cuniculus (Rabbit) protein is Lipase member H (LIPH).